The chain runs to 328 residues: Malate dehydrogenase (328 aa).

12–18 (GAAGQIG) contributes to the NAD(+) binding site. Substrate contacts are provided by arginine 95 and arginine 101. NAD(+)-binding positions include asparagine 108, glutamine 115, and 132 to 134 (VGN). Residues asparagine 134 and arginine 165 each contribute to the substrate site. The Proton acceptor role is filled by histidine 190.

The protein belongs to the LDH/MDH superfamily. MDH type 2 family.

The enzyme catalyses (S)-malate + NAD(+) = oxaloacetate + NADH + H(+). Functionally, catalyzes the reversible oxidation of malate to oxaloacetate. The sequence is that of Malate dehydrogenase from Variovorax paradoxus (strain S110).